We begin with the raw amino-acid sequence, 522 residues long: Biotin-dependent long chain acyl-coenzyme A carboxylase beta4 subunit (522 aa).

A CoA carboxyltransferase N-terminal domain is found at 11–261 (TAEKLAELRE…NCFDKPPVVN (251 aa)). The CoA carboxyltransferase C-terminal domain occupies 270–503 (GHDLELDSIV…RLLLRKSMHL (234 aa)).

It belongs to the AccD/PCCB family. The biotin-dependent long-chain acyl-CoA carboxylase (LCC) complex is composed of AccA3, which contains the biotin carboxylase (BC) and biotin carboxyl carrier protein (BCCP) domains, and AccD4, which contains the carboxyl transferase (CT) domain. The complex also contains the beta5 subunit AccD5 and the epsilon subunit AccE5. The four subunits are essential for activity, but AccD5, together with AccE5, probably plays a structural role rather than a catalytic one.

Its function is as follows. Component of a biotin-dependent acyl-CoA carboxylase complex. This subunit transfers the CO2 from carboxybiotin to the CoA ester substrate. When associated with the alpha3 subunit AccA3, the beta5 subunit AccD5 and the epsilon subunit AccE5, forms the LCC complex, which is involved in the carboxylation of long chain acyl-CoA. The LCC complex can use C16-C24 substrates, the highest specific activity is obtained with carboxy-C20-CoA. Has low activity with acetyl-CoA and propionyl-CoA. This Mycobacterium tuberculosis (strain ATCC 25618 / H37Rv) protein is Biotin-dependent long chain acyl-coenzyme A carboxylase beta4 subunit.